Reading from the N-terminus, the 272-residue chain is MRMALGISYNGQAYCGWQSQPSVRTVQDALEAALGRFATHPVSTLCAGRTDAGVHGLMQVVHFDTPLDRPAASWVRGTNGFLPADIAVQWAQAVPDSFHARASALARRYAYVLLQSPVRPSVESGRVGWVCHRLDHDAMQQAADYLVGEHDFSAFRASTCQAPSPVKTLRRIGISCRGQSPPHPALGWSPCYWRFEFVANAFLHHMIRNIMGCLVAIGQGKQSPQWMQQLLRARSRAAAAPTFAPDGLYFLGPVYAAGWGLPERTVAFDGWP.

The active-site Nucleophile is Asp51. Residue Tyr109 participates in substrate binding.

It belongs to the tRNA pseudouridine synthase TruA family. In terms of assembly, homodimer.

It catalyses the reaction uridine(38/39/40) in tRNA = pseudouridine(38/39/40) in tRNA. Formation of pseudouridine at positions 38, 39 and 40 in the anticodon stem and loop of transfer RNAs. The sequence is that of tRNA pseudouridine synthase A from Verminephrobacter eiseniae (strain EF01-2).